The primary structure comprises 144 residues: Large ribosomal subunit protein uL13 (144 aa).

The protein belongs to the universal ribosomal protein uL13 family. Part of the 50S ribosomal subunit.

Its function is as follows. This protein is one of the early assembly proteins of the 50S ribosomal subunit, although it is not seen to bind rRNA by itself. It is important during the early stages of 50S assembly. The chain is Large ribosomal subunit protein uL13 from Herpetosiphon aurantiacus (strain ATCC 23779 / DSM 785 / 114-95).